We begin with the raw amino-acid sequence, 98 residues long: PqqA binding protein (98 aa).

This sequence belongs to the PqqD family. Monomer. Interacts with PqqE.

It functions in the pathway cofactor biosynthesis; pyrroloquinoline quinone biosynthesis. In terms of biological role, functions as a PqqA binding protein and presents PqqA to PqqE, in the pyrroloquinoline quinone (PQQ) biosynthetic pathway. This Rhizobium meliloti (strain 1021) (Ensifer meliloti) protein is PqqA binding protein.